The primary structure comprises 180 residues: MATQTVFDFPDDVLQQPPMPADNAFSDKDVKGQDVELSKYKGKVLLIVNVASQCGFTNSNYPELTTLYQKYKDQGFEILAFPCNQFGGQEPGSNEEIQVFACTRFKAEYPVFSKVNVNGKEADPLYKFLKSSKGGFLGDSIKWNFTKFLVDREGKVVDRYAPTTSPLSIEKDIKKLLNVA.

Cys54 is a catalytic residue.

Belongs to the glutathione peroxidase family.

It is found in the cytoplasm. It catalyses the reaction a hydroperoxy polyunsaturated fatty acid + 2 glutathione = a hydroxy polyunsaturated fatty acid + glutathione disulfide + H2O. Its function is as follows. Protects cells and enzymes from oxidative damage, by catalyzing the reduction of hydrogen peroxide, lipid peroxides and organic hydroperoxide, by glutathione. The protein is Probable phospholipid hydroperoxide glutathione peroxidase (GPXHA-2) of Helianthus annuus (Common sunflower).